The primary structure comprises 384 residues: Probable circularly permuted 1,3-beta-glucanase PGA52 (384 aa).

Positions Met1–Ala17 are cleaved as a signal peptide. Residues Asn118, Asn128, Asn170, Asn210, and Asn244 are each glycosylated (N-linked (GlcNAc...) asparagine). The ExDxxE motif signature appears at Glu254 to Glu259. 2 N-linked (GlcNAc...) asparagine glycosylation sites follow: Asn262 and Asn318. Residue Ser361 is the site of GPI-anchor amidated serine attachment. A propeptide spans Gly362–Ile384 (removed in mature form).

It belongs to the PGA52 family.

The protein resides in the cell membrane. The enzyme catalyses Hydrolysis of (1-&gt;3)-beta-D-glucosidic linkages in (1-&gt;3)-beta-D-glucans.. Functionally, probable circularly permuted 1,3-beta-glucanase involved in cell wall modification through beta-1,3-glucan network alterations such as increased branching or remodeling. This chain is Probable circularly permuted 1,3-beta-glucanase PGA52 (PGA52), found in Candida albicans (strain SC5314 / ATCC MYA-2876) (Yeast).